The chain runs to 353 residues: Chorismate synthase (353 aa).

Positions 48 and 54 each coordinate NADP(+). Residues 125-127 (RSS), 238-239 (NA), glycine 278, 293-297 (KPTSS), and arginine 319 each bind FMN.

The protein belongs to the chorismate synthase family. As to quaternary structure, homotetramer. Requires FMNH2 as cofactor.

The enzyme catalyses 5-O-(1-carboxyvinyl)-3-phosphoshikimate = chorismate + phosphate. Its pathway is metabolic intermediate biosynthesis; chorismate biosynthesis; chorismate from D-erythrose 4-phosphate and phosphoenolpyruvate: step 7/7. Functionally, catalyzes the anti-1,4-elimination of the C-3 phosphate and the C-6 proR hydrogen from 5-enolpyruvylshikimate-3-phosphate (EPSP) to yield chorismate, which is the branch point compound that serves as the starting substrate for the three terminal pathways of aromatic amino acid biosynthesis. This reaction introduces a second double bond into the aromatic ring system. The protein is Chorismate synthase of Bordetella parapertussis (strain 12822 / ATCC BAA-587 / NCTC 13253).